Consider the following 653-residue polypeptide: DUF21 domain-containing protein At1g55930, chloroplastic (653 aa).

The transit peptide at 1 to 72 (MELDLSVLGR…DFSHRCQFVV (72 aa)) directs the protein to the chloroplast. The next 5 helical transmembrane spans lie at 103–123 (GIVL…KVLA), 157–177 (GLIL…ETSI), 208–228 (FLTT…ALVT), 234–254 (IFGE…ILLL), and 280–300 (WLSL…MGIL). The 187-residue stretch at 149–335 (VLKVLREQGL…ELSGAIEEEE (187 aa)) folds into the CNNM transmembrane domain. CBS domains lie at 354-415 (MTPL…LLES) and 421-479 (MAHK…IFDE).

The protein localises to the plastid. It localises to the chloroplast membrane. The polypeptide is DUF21 domain-containing protein At1g55930, chloroplastic (CBSDUFCH2) (Arabidopsis thaliana (Mouse-ear cress)).